Consider the following 495-residue polypeptide: ATP synthase subunit beta, chloroplastic (495 aa).

172-179 (GGAGVGKT) is an ATP binding site.

This sequence belongs to the ATPase alpha/beta chains family. As to quaternary structure, F-type ATPases have 2 components, CF(1) - the catalytic core - and CF(0) - the membrane proton channel. CF(1) has five subunits: alpha(3), beta(3), gamma(1), delta(1), epsilon(1). CF(0) has four main subunits: a(1), b(1), b'(1) and c(9-12).

The protein localises to the plastid. Its subcellular location is the chloroplast thylakoid membrane. It carries out the reaction ATP + H2O + 4 H(+)(in) = ADP + phosphate + 5 H(+)(out). In terms of biological role, produces ATP from ADP in the presence of a proton gradient across the membrane. The catalytic sites are hosted primarily by the beta subunits. This Convallaria majalis (Lily of the valley) protein is ATP synthase subunit beta, chloroplastic.